Reading from the N-terminus, the 855-residue chain is DNA mismatch repair protein MutS (855 aa).

613 to 620 (GPNMGGKS) is an ATP binding site. Residues 796 to 816 (TTSLPHEMPSQQSGKPASPMQ) form a disordered region.

The protein belongs to the DNA mismatch repair MutS family.

This protein is involved in the repair of mismatches in DNA. It is possible that it carries out the mismatch recognition step. This protein has a weak ATPase activity. The sequence is that of DNA mismatch repair protein MutS from Pseudomonas aeruginosa (strain LESB58).